The following is a 328-amino-acid chain: E3 ubiquitin-protein ligase SINA-like 5 (328 aa).

A disordered region spans residues 1–77 (MARSGGNDGH…GSPKSSQPVK (77 aa)). Composition is skewed to acidic residues over residues 10-20 (HEEELDPELFE) and 27-62 (GYED…ENVT). The segment covering 63–77 (TDEQSGSPKSSQPVK) has biased composition (polar residues). The RING-type; degenerate zinc finger occupies 86–122 (CPTCCEPLKRPIYQCSNGHLACSSCCQKLNKKCSFCR). Residues 136–324 (VIEASIVPCP…MQICIAYGYK (189 aa)) form an SBD region. An SIAH-type; degenerate zinc finger spans residues 139-197 (ASIVPCPNAKHGCKETTTYCNQSSHEKVCKFVRCSCPVSNCNYVSSYSNLKSHACSTAH). Zn(2+) is bound by residues Cys-144, Cys-151, His-163, Cys-167, Cys-174, Cys-179, His-191, and His-197.

It belongs to the SINA (Seven in absentia) family.

It catalyses the reaction S-ubiquitinyl-[E2 ubiquitin-conjugating enzyme]-L-cysteine + [acceptor protein]-L-lysine = [E2 ubiquitin-conjugating enzyme]-L-cysteine + N(6)-ubiquitinyl-[acceptor protein]-L-lysine.. The protein operates within protein modification; protein ubiquitination. E3 ubiquitin-protein ligase that mediates ubiquitination and subsequent proteasomal degradation of target proteins. E3 ubiquitin ligases accept ubiquitin from an E2 ubiquitin-conjugating enzyme in the form of a thioester and then directly transfers the ubiquitin to targeted substrates. It probably triggers the ubiquitin-mediated degradation of different substrates. This is E3 ubiquitin-protein ligase SINA-like 5 from Arabidopsis thaliana (Mouse-ear cress).